We begin with the raw amino-acid sequence, 338 residues long: Taste receptor type 2 member 39 (338 aa).

Residues Met1 to Ser30 are Extracellular-facing. The chain crosses the membrane as a helical span at residues Pro31–Ala51. Residues Asn52–Arg74 lie on the Cytoplasmic side of the membrane. Residues Ile75–Thr95 form a helical membrane-spanning segment. Topologically, residues Ile96–Ser116 are extracellular. Residues Phe117 to Val137 traverse the membrane as a helical segment. Over Lys138 to Gly156 the chain is Cytoplasmic. A helical membrane pass occupies residues Leu157–Ile177. Topologically, residues Asn178 to Ser205 are extracellular. Asn194 carries N-linked (GlcNAc...) asparagine glycosylation. Residues Val206–Leu226 form a helical membrane-spanning segment. Topologically, residues Ala227–Lys262 are cytoplasmic. A helical transmembrane segment spans residues Ala263 to Ser283. Topologically, residues Asn284–Leu291 are extracellular. The helical transmembrane segment at Trp292–Ile312 threads the bilayer. Residues Lys313–Leu338 are Cytoplasmic-facing.

The protein belongs to the G-protein coupled receptor T2R family.

It localises to the membrane. Functionally, receptor that may play a role in the perception of bitterness and is gustducin-linked. May play a role in sensing the chemical composition of the gastrointestinal content. The activity of this receptor may stimulate alpha gustducin, mediate PLC-beta-2 activation and lead to the gating of TRPM5. The sequence is that of Taste receptor type 2 member 39 (TAS2R39) from Macaca mulatta (Rhesus macaque).